The chain runs to 356 residues: L-Lys-D/L-Arg epimerase (356 aa).

Substrate-binding positions include T135 and 160–162; that span reads KVK. 3 residues coordinate Mg(2+): D190, E216, and D241. Substrate-binding positions include K266, D296, and 319-321; that span reads DLD.

This sequence belongs to the mandelate racemase/muconate lactonizing enzyme family. The cofactor is Mg(2+).

Catalyzes the epimerization of L-Lys-L-Arg to L-Lys-D-Arg. Can also catalyze the epimerization of other cationic dipeptides, such as L-Arg-L-Arg, L-Lys-L-Lys and L-Lys-L-His, but with lower efficiency (in vitro). The protein is L-Lys-D/L-Arg epimerase of Methylococcus capsulatus (strain ATCC 33009 / NCIMB 11132 / Bath).